Reading from the N-terminus, the 433-residue chain is 4-hydroxy-3-methylbut-2-en-1-yl diphosphate synthase (flavodoxin) (433 aa).

Positions 1–10 (MRYMQDSSMP) are enriched in polar residues. Residues 1-24 (MRYMQDSSMPCQDASPPDVGAAPR) are disordered. Residues Cys320, Cys323, Cys366, and Glu373 each contribute to the [4Fe-4S] cluster site.

Belongs to the IspG family. Requires [4Fe-4S] cluster as cofactor.

It catalyses the reaction (2E)-4-hydroxy-3-methylbut-2-enyl diphosphate + oxidized [flavodoxin] + H2O + 2 H(+) = 2-C-methyl-D-erythritol 2,4-cyclic diphosphate + reduced [flavodoxin]. Its pathway is isoprenoid biosynthesis; isopentenyl diphosphate biosynthesis via DXP pathway; isopentenyl diphosphate from 1-deoxy-D-xylulose 5-phosphate: step 5/6. In terms of biological role, converts 2C-methyl-D-erythritol 2,4-cyclodiphosphate (ME-2,4cPP) into 1-hydroxy-2-methyl-2-(E)-butenyl 4-diphosphate. This is 4-hydroxy-3-methylbut-2-en-1-yl diphosphate synthase (flavodoxin) from Bordetella bronchiseptica (strain ATCC BAA-588 / NCTC 13252 / RB50) (Alcaligenes bronchisepticus).